A 344-amino-acid polypeptide reads, in one-letter code: Trace amine-associated receptor 8b (344 aa).

The Extracellular segment spans residues 1 to 33; that stretch reads MTSNFSQATLQLCYENVNASCIKTPYSPGLRVL. Residues N4 and N18 are each glycosylated (N-linked (GlcNAc...) asparagine). 2 disulfide bridges follow: C21–C185 and C104–C189. A helical membrane pass occupies residues 34–54; the sequence is LYMVFGFGAVLAVCGNLLVVI. Residues 55–67 are Cytoplasmic-facing; the sequence is SVLHFKQLHSPAN. A helical transmembrane segment spans residues 68 to 88; it reads FLIASLASADFLVGISVMPFS. Topologically, residues 89–102 are extracellular; the sequence is MVRSIESCWYFGDT. A helical membrane pass occupies residues 103–127; the sequence is FCSLHSCCDAAFCYSSLFHLCFISV. Residues 128-146 are Cytoplasmic-facing; that stretch reads DRYIAVTEPLVYPTKFTMS. A helical transmembrane segment spans residues 147 to 167; it reads VSGICISISWILPLVYSSAVF. At 168–196 the chain is on the extracellular side; sequence YTGISATGIENLVSALNCVGGCQVAINQD. A helical membrane pass occupies residues 197–217; that stretch reads WVLISFLLFFIPTLVMIILYS. The Cytoplasmic portion of the chain corresponds to 218 to 256; it reads KIFLVAKQQAVKIETSISGSKGESSLESHKARVAKRERK. The chain crosses the membrane as a helical span at residues 257–277; the sequence is AAKTLGVTVMAFMVSWLPYTI. The Extracellular segment spans residues 278–295; that stretch reads DTLIDAFMGFITPAYVYE. The chain crosses the membrane as a helical span at residues 296 to 319; sequence ICGWIAYYNSAMNPLIYAFFYPWF. Residues 320-344 are Cytoplasmic-facing; sequence RKAIKLILSGKILKGHSSTTSLFSE.

Belongs to the G-protein coupled receptor 1 family.

Its subcellular location is the cell membrane. Olfactory receptor activated by trace amines. Trace amine compounds are enriched in animal body fluids and act on trace amine-associated receptors (TAARs) to elicit both intraspecific and interspecific innate behaviors. Ligand-binding causes a conformation change that triggers signaling via G(s)-class of G alpha proteins (GNAL or GNAS). The sequence is that of Trace amine-associated receptor 8b from Rattus norvegicus (Rat).